The chain runs to 61 residues: Large ribosomal subunit protein uL30 (61 aa).

It belongs to the universal ribosomal protein uL30 family. As to quaternary structure, part of the 50S ribosomal subunit.

The protein is Large ribosomal subunit protein uL30 of Parafrankia sp. (strain EAN1pec).